A 134-amino-acid chain; its full sequence is TSC22 domain family protein 3 (134 aa).

Position 1 is an N-acetylmethionine (Met1). An AP1-binding region spans residues 1–60 (MNTEMYQTPMEVAVYQLHNFSISFFSSLLGGDVVSVKLDNSASGASVVAIDNKIEQAMDL). 2 positions are modified to phosphoserine: Ala42 and Val73. Residues 76–97 (LKEQIRELVEKNSQLERENTLL) form a leucine-zipper region. Ser102 is modified (phosphoserine). Positions 108 to 134 (KFQSCLSPEEPAPESPQVPEAPGGSAV) are disordered.

Belongs to the TSC-22/Dip/Bun family. Can form homodimers, however it is likely to function as a monomer. Interacts with NFKB1. Interacts (via N-terminus) with JUN and FOS; these interactions inhibit the binding of active AP1 to its target DNA. As to quaternary structure, interacts with MYOD1. Interacts with HDAC1; this interaction affects HDAC1 activity on MYOG promoter and thus inhibits MYOD1 transcriptional activity. Ubiquitously expressed, including in the fetal brain and liver. Expressed in brain, lung, spleen and skeletal muscle. Lower levels detected in heart and kidney. Not detected in the pancreas. In non-lymphoid tissues, in the absence of inflammation, the major source of constitutive expression is the macrophage lineage. Also expressed in cells from different hemopoietic cell lineages, including bone marrow cells, CD34+ stem cells, mature B- and T-cells, monocytes and granulocytes. Down-regulated in activated macrophages from inflammatory lesions of delayed-type hypersensitivity (DTH) reactions, such as in tuberculosis and in Crohn disease, whereas in Burkitt lymphoma, persists in macrophages involved in the phagocytosis of apoptotic malignant cells.

The protein localises to the cytoplasm. It localises to the nucleus. Protects T-cells from IL2 deprivation-induced apoptosis through the inhibition of FOXO3A transcriptional activity that leads to the down-regulation of the pro-apoptotic factor BCL2L11. In macrophages, plays a role in the anti-inflammatory and immunosuppressive effects of glucocorticoids and IL10. In T-cells, inhibits anti-CD3-induced NFKB1 nuclear translocation and thereby NFKB1 DNA-binding activities. In vitro, suppresses AP-1 transcription factor complex DNA-binding activities. Functionally, inhibits myogenic differentiation and mediates anti-myogenic effects of glucocorticoids by binding and regulating MYOD1 and HDAC1 transcriptional activity resulting in reduced expression of MYOG. The protein is TSC22 domain family protein 3 of Homo sapiens (Human).